The chain runs to 135 residues: ATP synthase epsilon chain (135 aa).

It belongs to the ATPase epsilon chain family. In terms of assembly, F-type ATPases have 2 components, CF(1) - the catalytic core - and CF(0) - the membrane proton channel. CF(1) has five subunits: alpha(3), beta(3), gamma(1), delta(1), epsilon(1). CF(0) has three main subunits: a, b and c.

The protein resides in the cell inner membrane. In terms of biological role, produces ATP from ADP in the presence of a proton gradient across the membrane. The sequence is that of ATP synthase epsilon chain from Mesorhizobium japonicum (strain LMG 29417 / CECT 9101 / MAFF 303099) (Mesorhizobium loti (strain MAFF 303099)).